Reading from the N-terminus, the 182-residue chain is ATP synthase subunit delta (182 aa).

This sequence belongs to the ATPase delta chain family. F-type ATPases have 2 components, F(1) - the catalytic core - and F(0) - the membrane proton channel. F(1) has five subunits: alpha(3), beta(3), gamma(1), delta(1), epsilon(1). F(0) has three main subunits: a(1), b(2) and c(10-14). The alpha and beta chains form an alternating ring which encloses part of the gamma chain. F(1) is attached to F(0) by a central stalk formed by the gamma and epsilon chains, while a peripheral stalk is formed by the delta and b chains.

It is found in the cell inner membrane. Functionally, f(1)F(0) ATP synthase produces ATP from ADP in the presence of a proton or sodium gradient. F-type ATPases consist of two structural domains, F(1) containing the extramembraneous catalytic core and F(0) containing the membrane proton channel, linked together by a central stalk and a peripheral stalk. During catalysis, ATP synthesis in the catalytic domain of F(1) is coupled via a rotary mechanism of the central stalk subunits to proton translocation. This protein is part of the stalk that links CF(0) to CF(1). It either transmits conformational changes from CF(0) to CF(1) or is implicated in proton conduction. This chain is ATP synthase subunit delta, found in Hydrogenobaculum sp. (strain Y04AAS1).